The chain runs to 349 residues: UPF0324 inner membrane protein YeiH (349 aa).

Residues 1 to 12 (MTNITLQKQHRT) lie on the Periplasmic side of the membrane. Residues 13-32 (LWHFIPGLALSAVITGVALW) form a helical membrane-spanning segment. The Cytoplasmic segment spans residues 33 to 35 (GGS). Residues 36–58 (IPAVAGAGFSALTLAILLGMVLG) traverse the membrane as a helical segment. The Periplasmic portion of the chain corresponds to 59–99 (NTIYPHIWKSCDGGVLFAKQYLLRLGIILYGFRLTFSQIAD). A helical transmembrane segment spans residues 100–122 (VGISGIIIDVLTLSSTFLLACFL). The Cytoplasmic portion of the chain corresponds to 123–131 (GQKVFGLDK). Residues 132 to 151 (HTSWLIGAGSSICGAAAVLA) traverse the membrane as a helical segment. Residues 152–162 (TEPVVKAEASK) are Periplasmic-facing. Residues 163–185 (VTVAVATVVIFGTVAIFLYPAIY) form a helical membrane-spanning segment. At 186–261 (PLMSQWFSPE…SGTNSGEKSK (76 aa)) the chain is on the cytoplasmic side. A helical membrane pass occupies residues 262–283 (ITIPWFAILFIVVAIFNSFHLL). The Periplasmic segment spans residues 284-289 (PQSVVN). A helical membrane pass occupies residues 290–312 (MLVTLDTFLLAMAMAALGLTTHV). Residues 313–321 (SALKKAGAK) lie on the Cytoplasmic side of the membrane. The helical transmembrane segment at 322–344 (PLLMALVLFAWLIVGGGAINYVI) threads the bilayer. The Periplasmic segment spans residues 345–349 (QSVIA).

It belongs to the UPF0324 family.

The protein resides in the cell inner membrane. The chain is UPF0324 inner membrane protein YeiH (yeiH) from Escherichia coli O6:H1 (strain CFT073 / ATCC 700928 / UPEC).